A 202-amino-acid polypeptide reads, in one-letter code: Small ribosomal subunit protein uS4 (202 aa).

The S4 RNA-binding domain occupies 94-157 (SRLDNLVYRM…KDLPIVAAGA (64 aa)).

This sequence belongs to the universal ribosomal protein uS4 family. In terms of assembly, part of the 30S ribosomal subunit. Contacts protein S5. The interaction surface between S4 and S5 is involved in control of translational fidelity.

One of the primary rRNA binding proteins, it binds directly to 16S rRNA where it nucleates assembly of the body of the 30S subunit. In terms of biological role, with S5 and S12 plays an important role in translational accuracy. The protein is Small ribosomal subunit protein uS4 of Malacoplasma penetrans (strain HF-2) (Mycoplasma penetrans).